The primary structure comprises 865 residues: Serine/threonine-protein kinase greatwall (865 aa).

Methionine 1 bears the N-acetylmethionine mark. The Protein kinase domain maps to 34–821 (FTIVKPISRG…MRELKQHPLF (788 aa)). ATP is bound by residues 40–48 (ISRGAFGKV) and lysine 61. Aspartate 155 acts as the Proton acceptor in catalysis. Phosphothreonine is present on residues threonine 206 and threonine 221. A phosphoserine mark is found at serine 362 and serine 442. A Phosphothreonine modification is found at threonine 508. 4 positions are modified to phosphoserine: serine 545, serine 619, serine 644, and serine 655. Threonine 708 carries the post-translational modification Phosphothreonine. Phosphoserine is present on serine 711. At threonine 727 the chain carries Phosphothreonine; by CDK1. Residues 822-865 (SEVDWENLQHQTMPFVPQPDDETDTSYFEARNNAQHLTISGFSL) form the AGC-kinase C-terminal domain. 2 positions are modified to phosphoserine: serine 861 and serine 864.

This sequence belongs to the protein kinase superfamily. AGC Ser/Thr protein kinase family. Phosphorylation at Thr-727 by CDK1 during M phase activates its kinase activity. Maximum phosphorylation occurs in prometaphase.

It is found in the cytoplasm. It localises to the cytoskeleton. The protein resides in the microtubule organizing center. Its subcellular location is the centrosome. The protein localises to the nucleus. The catalysed reaction is L-seryl-[protein] + ATP = O-phospho-L-seryl-[protein] + ADP + H(+). The enzyme catalyses L-threonyl-[protein] + ATP = O-phospho-L-threonyl-[protein] + ADP + H(+). Functionally, serine/threonine kinase that plays a key role in M phase by acting as a regulator of mitosis entry and maintenance. Acts by promoting the inactivation of protein phosphatase 2A (PP2A) during M phase: does not directly inhibit PP2A but acts by mediating phosphorylation and subsequent activation of ARPP19 and ENSA at 'Ser-62' and 'Ser-67', respectively. ARPP19 and ENSA are phosphatase inhibitors that specifically inhibit the PPP2R2D (PR55-delta) subunit of PP2A. Inactivation of PP2A during M phase is essential to keep cyclin-B1-CDK1 activity high. Following DNA damage, it is also involved in checkpoint recovery by being inhibited. The chain is Serine/threonine-protein kinase greatwall (Mastl) from Mus musculus (Mouse).